Consider the following 1025-residue polypeptide: AP-2 complex subunit alpha (1025 aa).

The segment at 713–737 is disordered; it reads RSIMVPMPPPSRRNTIDDVNSKISS. Thr727 is modified (phosphothreonine). Ser733 bears the Phosphoserine mark.

This sequence belongs to the adaptor complexes large subunit family. As to quaternary structure, adaptor protein complex 2 (AP-2) is a heterotetramer composed of two large adaptins (alpha-type subunit APL3 and beta-type subunit APL1), a medium chain (mu-type subunit APM4) and a small adaptin (sigma-type subunit APS2).

It localises to the cell membrane. Its subcellular location is the membrane. The protein resides in the coated pit. Its function is as follows. Adaptins are components of the adaptor complexes which link clathrin to receptors in coated vesicles. Clathrin-associated protein complexes are believed to interact with the cytoplasmic tails of membrane proteins, leading to their selection and concentration. Alpha adaptin is a subunit of the plasma membrane adaptor. Facilitates interaction between APL1 and APS2. This chain is AP-2 complex subunit alpha (APL3), found in Saccharomyces cerevisiae (strain ATCC 204508 / S288c) (Baker's yeast).